Reading from the N-terminus, the 131-residue chain is Small ribosomal subunit protein eS8 (131 aa).

The interval 1 to 38 (MKLGAYYKGGDLKKPSGGKKRKVRRTKKKALGGGPPQI) is disordered. Basic residues predominate over residues 16-30 (SGGKKRKVRRTKKKA).

Belongs to the eukaryotic ribosomal protein eS8 family. As to quaternary structure, part of the 30S ribosomal subunit.

In Pyrobaculum arsenaticum (strain DSM 13514 / JCM 11321 / PZ6), this protein is Small ribosomal subunit protein eS8.